The following is a 125-amino-acid chain: Succinate dehydrogenase assembly factor 3, mitochondrial (125 aa).

Residues 1 to 30 constitute a mitochondrion transit peptide; the sequence is MPGRHVSRVRALYKRVLQLHRVLPPDLKSL.

This sequence belongs to the complex I LYR family. SDHAF3 subfamily. Interacts with SDHB within an SDHA-SDHB subcomplex.

The protein localises to the mitochondrion matrix. Plays an essential role in the assembly of succinate dehydrogenase (SDH), an enzyme complex (also referred to as respiratory complex II) that is a component of both the tricarboxylic acid (TCA) cycle and the mitochondrial electron transport chain, and which couples the oxidation of succinate to fumarate with the reduction of ubiquinone (coenzyme Q) to ubiquinol. Promotes maturation of the iron-sulfur protein subunit SDHB of the SDH catalytic dimer, protecting it from the deleterious effects of oxidants. May act together with SDHAF1. This chain is Succinate dehydrogenase assembly factor 3, mitochondrial, found in Homo sapiens (Human).